The following is a 184-amino-acid chain: Large ribosomal subunit protein uL22 (184 aa).

Belongs to the universal ribosomal protein uL22 family. Part of the 50S ribosomal subunit.

Functionally, this protein binds specifically to 23S rRNA. It makes multiple contacts with different domains of the 23S rRNA in the assembled 50S subunit and ribosome. The globular domain of the protein is located near the polypeptide exit tunnel on the outside of the subunit, while an extended beta-hairpin is found that lines the wall of the exit tunnel in the center of the 70S ribosome. This Pyrobaculum calidifontis (strain DSM 21063 / JCM 11548 / VA1) protein is Large ribosomal subunit protein uL22.